A 436-amino-acid polypeptide reads, in one-letter code: 3-ketoacyl-CoA thiolase (436 aa).

The active-site Acyl-thioester intermediate is cysteine 99. Residues histidine 392 and cysteine 422 each act as proton acceptor in the active site.

This sequence belongs to the thiolase-like superfamily. Thiolase family. As to quaternary structure, heterotetramer of two alpha chains (FadJ) and two beta chains (FadI).

It is found in the cytoplasm. It carries out the reaction an acyl-CoA + acetyl-CoA = a 3-oxoacyl-CoA + CoA. It functions in the pathway lipid metabolism; fatty acid beta-oxidation. Its function is as follows. Catalyzes the final step of fatty acid oxidation in which acetyl-CoA is released and the CoA ester of a fatty acid two carbons shorter is formed. The chain is 3-ketoacyl-CoA thiolase from Yersinia enterocolitica serotype O:8 / biotype 1B (strain NCTC 13174 / 8081).